The chain runs to 674 residues: Leucine-rich repeat transmembrane protein FLRT1 (674 aa).

The first 51 residues, 1–51 (MVVAHSAATATTTPAATVTATVVMTTATMDLRDWLFLCYGLIAFLTEVIDS), serve as a signal peptide directing secretion. Over 52–552 (TTCPSVCRCD…QNAGPMAGLP (501 aa)) the chain is Extracellular. 2 disulfides stabilise this stretch: Cys54/Cys60 and Cys58/Cys67. An LRRNT domain is found at 54-80 (CPSVCRCDNGFIYCNDRGLTSIPSDIP). LRR repeat units lie at residues 81–105 (DDAT…LKTK), 106–126 (VKVQ…INLP), 127–149 (RSLR…SLAR), 151–175 (PLLE…AFAD), 176–197 (SKQL…SGLP), 198–220 (HTLE…AFKG), 222–246 (NSLR…TFSR), 247–269 (LQNL…NLPS), 270–292 (AHLQ…TLAK), and 293–316 (MREL…LFDD). N-linked (GlcNAc...) asparagine glycosylation occurs at Asn305. An LRRCT domain is found at 328-379 (NPWFCGCNLMWLRDWVRARAAVVNVRGLMCQGPEKVRGMAIKDITSEMDECF). Residues Cys332 and Cys357 are joined by a disulfide bond. The region spanning 437-532 (KTLVIQVKPL…VCAKAETADS (96 aa)) is the Fibronectin type-III domain. A helical membrane pass occupies residues 553–573 (LAGIIGGAVALVFLFLVLGAI). At 574–674 (CWYVHRAGEL…GIPDVDYSYT (101 aa)) the chain is on the cytoplasmic side. Residues Tyr600, Tyr633, and Tyr671 each carry the phosphotyrosine modification.

Interacts with FGFR1. Interacts (via extracellular domain) with ADGRL1/LPHN1 and ADGRL3 (via olfactomedin-like domain). Post-translationally, phosphorylated in response to FGFR1 signaling, but is not a direct substrate of FGFR1 or SRC. A mutant where the Tyr phosphorylation sites have been replaced by Phe displays constitutive FGFR1-dependent activation of downstream MAP kinases. N-glycosylated. In terms of processing, proteolytic cleavage in the juxtamembrane region gives rise to a soluble ectodomain. As to expression, detected in brain (at protein level).

Its subcellular location is the cell membrane. It localises to the endoplasmic reticulum membrane. The protein resides in the cytoplasmic vesicle membrane. It is found in the cytoplasm. The protein localises to the perinuclear region. Its subcellular location is the cell junction. It localises to the focal adhesion. The protein resides in the secreted. It is found in the cell projection. The protein localises to the neuron projection. In terms of biological role, plays a role in fibroblast growth factor-mediated signaling cascades that lead to the activation of MAP kinases. Promotes neurite outgrowth via FGFR1-mediated activation of downstream MAP kinases. Promotes an increase both in neurite number and in neurite length. May play a role in cell-cell adhesion and cell guidance via its interaction with ADGRL1/LPHN1 and ADGRL3. In Mus musculus (Mouse), this protein is Leucine-rich repeat transmembrane protein FLRT1.